The sequence spans 213 residues: Ethylene-responsive transcription factor WIN1 (213 aa).

Residues 15-72 (KFRGVRQRHWGSWVSEIRHPLLKRRVWLGTFETAEEAARAYDEAAVLMSGRNAKTNFP) constitute a DNA-binding region (AP2/ERF). A compositionally biased stretch (polar residues) spans 70–80 (NFPIQRSSTGE). 2 disordered regions span residues 70–99 (NFPI…GSST) and 159–213 (ASTD…RFII). Low complexity predominate over residues 159–174 (ASTDAASQSTSATTAP).

This sequence belongs to the AP2/ERF transcription factor family. ERF subfamily. Mostly expressed in roots, stems and anthers, and, to a lower extent, in leaves, seeds and silks.

The protein resides in the nucleus. In terms of biological role, promotes cuticle formation by inducing the expression of enzymes involved in wax biosynthesis, particularly promoting very-long-chain waxes formation. Confers drought resistance. Acts as a transcriptional activator binding directly to promoter regions of CER2, CER3.2 and KCS1, wax biosynthesis-related genes. Binds to the GCC-box pathogenesis-related promoter element. May be involved in the regulation of gene expression by stress factors and by components of stress signal transduction pathways. The polypeptide is Ethylene-responsive transcription factor WIN1 (Zea mays (Maize)).